We begin with the raw amino-acid sequence, 275 residues long: Putative phosphoenolpyruvate synthase regulatory protein (275 aa).

An ADP-binding site is contributed by 153 to 160 (GVSRSGKT).

Belongs to the pyruvate, phosphate/water dikinase regulatory protein family. PSRP subfamily.

It carries out the reaction [pyruvate, water dikinase] + ADP = [pyruvate, water dikinase]-phosphate + AMP + H(+). The catalysed reaction is [pyruvate, water dikinase]-phosphate + phosphate + H(+) = [pyruvate, water dikinase] + diphosphate. In terms of biological role, bifunctional serine/threonine kinase and phosphorylase involved in the regulation of the phosphoenolpyruvate synthase (PEPS) by catalyzing its phosphorylation/dephosphorylation. The chain is Putative phosphoenolpyruvate synthase regulatory protein from Nitrosomonas eutropha (strain DSM 101675 / C91 / Nm57).